Consider the following 420-residue polypeptide: UDP-N-acetylglucosamine 1-carboxyvinyltransferase 1 (420 aa).

Residue lysine 22–asparagine 23 coordinates phosphoenolpyruvate. Residue arginine 91 participates in UDP-N-acetyl-alpha-D-glucosamine binding. The active-site Proton donor is the cysteine 115. Cysteine 115 is modified (2-(S-cysteinyl)pyruvic acid O-phosphothioketal). Residues arginine 120–leucine 124, aspartate 303, and valine 325 contribute to the UDP-N-acetyl-alpha-D-glucosamine site.

Belongs to the EPSP synthase family. MurA subfamily.

It is found in the cytoplasm. The catalysed reaction is phosphoenolpyruvate + UDP-N-acetyl-alpha-D-glucosamine = UDP-N-acetyl-3-O-(1-carboxyvinyl)-alpha-D-glucosamine + phosphate. It participates in cell wall biogenesis; peptidoglycan biosynthesis. Functionally, cell wall formation. Adds enolpyruvyl to UDP-N-acetylglucosamine. This is UDP-N-acetylglucosamine 1-carboxyvinyltransferase 1 from Carboxydothermus hydrogenoformans (strain ATCC BAA-161 / DSM 6008 / Z-2901).